Consider the following 201-residue polypeptide: Large ribosomal subunit protein uL4 (201 aa).

Residues 45 to 75 form a disordered region; that stretch reads AQKSRSEVSGSGKKPWRQKGTGRARSGSLRS.

Belongs to the universal ribosomal protein uL4 family. As to quaternary structure, part of the 50S ribosomal subunit.

One of the primary rRNA binding proteins, this protein initially binds near the 5'-end of the 23S rRNA. It is important during the early stages of 50S assembly. It makes multiple contacts with different domains of the 23S rRNA in the assembled 50S subunit and ribosome. Functionally, forms part of the polypeptide exit tunnel. The polypeptide is Large ribosomal subunit protein uL4 (Buchnera aphidicola subsp. Cinara cedri (strain Cc)).